We begin with the raw amino-acid sequence, 291 residues long: Acetyl-coenzyme A carboxylase carboxyl transferase subunit beta (291 aa).

One can recognise a CoA carboxyltransferase N-terminal domain in the interval I29–N291. Zn(2+) contacts are provided by C33, C36, C52, and C55. A C4-type zinc finger spans residues C33–C55.

This sequence belongs to the AccD/PCCB family. In terms of assembly, acetyl-CoA carboxylase is a heterohexamer composed of biotin carboxyl carrier protein (AccB), biotin carboxylase (AccC) and two subunits each of ACCase subunit alpha (AccA) and ACCase subunit beta (AccD). Requires Zn(2+) as cofactor.

The protein localises to the cytoplasm. The enzyme catalyses N(6)-carboxybiotinyl-L-lysyl-[protein] + acetyl-CoA = N(6)-biotinyl-L-lysyl-[protein] + malonyl-CoA. It functions in the pathway lipid metabolism; malonyl-CoA biosynthesis; malonyl-CoA from acetyl-CoA: step 1/1. Component of the acetyl coenzyme A carboxylase (ACC) complex. Biotin carboxylase (BC) catalyzes the carboxylation of biotin on its carrier protein (BCCP) and then the CO(2) group is transferred by the transcarboxylase to acetyl-CoA to form malonyl-CoA. The sequence is that of Acetyl-coenzyme A carboxylase carboxyl transferase subunit beta from Bacillus licheniformis (strain ATCC 14580 / DSM 13 / JCM 2505 / CCUG 7422 / NBRC 12200 / NCIMB 9375 / NCTC 10341 / NRRL NRS-1264 / Gibson 46).